We begin with the raw amino-acid sequence, 132 residues long: Small ribosomal subunit protein uS8 (132 aa).

The protein belongs to the universal ribosomal protein uS8 family. Part of the 30S ribosomal subunit. Contacts proteins S5 and S12.

In terms of biological role, one of the primary rRNA binding proteins, it binds directly to 16S rRNA central domain where it helps coordinate assembly of the platform of the 30S subunit. The chain is Small ribosomal subunit protein uS8 from Treponema pallidum (strain Nichols).